The chain runs to 62 residues: Large ribosomal subunit protein uL29 (62 aa).

The protein belongs to the universal ribosomal protein uL29 family.

This chain is Large ribosomal subunit protein uL29, found in Chromobacterium violaceum (strain ATCC 12472 / DSM 30191 / JCM 1249 / CCUG 213 / NBRC 12614 / NCIMB 9131 / NCTC 9757 / MK).